The sequence spans 314 residues: Probable cell division protein WhiA (314 aa).

The segment at residues 277–311 is a DNA-binding region (H-T-H motif); that stretch reads TLKELGEKMPSGAISKSGINHRLRKLNQLAEGYQQ.

This sequence belongs to the WhiA family.

Involved in cell division and chromosome segregation. The sequence is that of Probable cell division protein WhiA from Latilactobacillus sakei subsp. sakei (strain 23K) (Lactobacillus sakei subsp. sakei).